The primary structure comprises 203 residues: bMERB domain-containing protein 1 (203 aa).

The region spanning 3 to 149 (LKQSLSVHLE…EQEEDKEMAD (147 aa)) is the bMERB domain. The disordered stretch occupies residues 160–186 (KVTKSSASSRAEKKAEPPPSKPTVAKT).

This is bMERB domain-containing protein 1 (Bmerb1) from Rattus norvegicus (Rat).